A 117-amino-acid polypeptide reads, in one-letter code: Synaptobrevin homolog 1 (117 aa).

A disordered region spans residues 1–30; sequence MSSSTPFDPYALSEHDEERPQNVQSKSRTA. The Cytoplasmic segment spans residues 1 to 94; the sequence is MSSSTPFDPY…MWYKDLKMKM (94 aa). The v-SNARE coiled-coil homology domain occupies 28–88; it reads RTAELQAEID…NRVRKAMWYK (61 aa). A Glycyl lysine isopeptide (Lys-Gly) (interchain with G-Cter in ubiquitin) cross-link involves residue Lys63. Cys95 carries S-palmitoyl cysteine lipidation. A helical; Anchor for type IV membrane protein transmembrane segment spans residues 95 to 111; sequence CLALVIIILLVVIIVPI. Residues 112–117 are Vesicular-facing; sequence AVHFSR.

This sequence belongs to the synaptobrevin family. In terms of processing, palmitoylated by SWF1.

Its subcellular location is the endomembrane system. SNC1 and SNC2 are vesicle-targeting proteins essential for normal secretory traffic between the Golgi and the plasma membrane. They may also be involved in vesicle fusion. In Saccharomyces cerevisiae (strain ATCC 204508 / S288c) (Baker's yeast), this protein is Synaptobrevin homolog 1 (SNC1).